The chain runs to 320 residues: Undecaprenyl-diphosphatase (320 aa).

The next 8 membrane-spanning stretches (helical) occupy residues 9–29 (FVLV…LEVF), 82–102 (GVAF…WYFW), 130–150 (LGII…KKLI), 161–181 (LGAI…GEKL), 191–211 (LTMQ…IPGV), 236–256 (FLLG…DVFA), 265–285 (LPLI…IAGL), and 296–316 (VFIW…SAGI).

This sequence belongs to the UppP family.

It is found in the cell inner membrane. It catalyses the reaction di-trans,octa-cis-undecaprenyl diphosphate + H2O = di-trans,octa-cis-undecaprenyl phosphate + phosphate + H(+). Its function is as follows. Catalyzes the dephosphorylation of undecaprenyl diphosphate (UPP). Confers resistance to bacitracin. This chain is Undecaprenyl-diphosphatase, found in Trichormus variabilis (strain ATCC 29413 / PCC 7937) (Anabaena variabilis).